The chain runs to 54 residues: Small polypeptide DEVIL 12 (54 aa).

The required for DVL/RTFL small polypeptide activity stretch occupies residues 20–51; it reads NNKLTPNRSLKETRSRLYIIRRCLVMLLCWRE. A glycan (N-linked (GlcNAc...) asparagine) is linked at Asn26. Residues 31-48 traverse the membrane as a helical segment; the sequence is ETRSRLYIIRRCLVMLLC.

This sequence belongs to the DVL/RTFL small polypeptides family.

The protein localises to the cell membrane. Functionally, small polypeptide acting as a regulatory molecule which coordinates cellular responses required for differentiation, growth and development, probably by restricting polar cell proliferation in lateral organs and coordinating socket cell recruitment and differentiation at trichome sites. The protein is Small polypeptide DEVIL 12 of Arabidopsis thaliana (Mouse-ear cress).